Here is a 189-residue protein sequence, read N- to C-terminus: uncharacterized protein (189 aa).

This is an uncharacterized protein from Danio rerio (Zebrafish).